We begin with the raw amino-acid sequence, 188 residues long: Elongation factor P (188 aa).

This sequence belongs to the elongation factor P family.

The protein localises to the cytoplasm. Its pathway is protein biosynthesis; polypeptide chain elongation. Involved in peptide bond synthesis. Stimulates efficient translation and peptide-bond synthesis on native or reconstituted 70S ribosomes in vitro. Probably functions indirectly by altering the affinity of the ribosome for aminoacyl-tRNA, thus increasing their reactivity as acceptors for peptidyl transferase. The polypeptide is Elongation factor P (Rhodopseudomonas palustris (strain ATCC BAA-98 / CGA009)).